We begin with the raw amino-acid sequence, 552 residues long: 4-coumarate--CoA ligase-like 3 (552 aa).

Positions 207, 208, 209, 210, 211, and 215 each coordinate ATP. Phenylalanine 252 provides a ligand contact to (E)-4-coumaroyl-AMP. Arginine 273 provides a ligand contact to CoA. The interval 275–346 (GLDDMMQAVE…EKYPTVNIFQ (72 aa)) is SBD1. (E)-4-coumaroyl-AMP-binding residues include glycine 324, glutamine 346, glycine 347, and threonine 351. Positions 346, 347, 351, 432, and 447 each coordinate ATP. An SBD2 region spans residues 347–411 (GYALTESHGS…LKGPSISKGY (65 aa)). Positions 449 and 453 each coordinate (E)-4-coumaroyl-AMP. CoA-binding residues include lysine 455 and glycine 456. Residue lysine 538 participates in ATP binding. Residues 550–552 (SKL) carry the Microbody targeting signal motif.

It belongs to the ATP-dependent AMP-binding enzyme family. Mg(2+) is required as a cofactor.

The protein resides in the peroxisome. It carries out the reaction (E)-4-coumarate + ATP + CoA = (E)-4-coumaroyl-CoA + AMP + diphosphate. It catalyses the reaction (E)-4-coumarate + ATP + H(+) = (E)-4-coumaroyl-AMP + diphosphate. The enzyme catalyses (E)-4-coumaroyl-AMP + CoA = (E)-4-coumaroyl-CoA + AMP + H(+). Its function is as follows. Carboxylate--CoA ligase that may use 4-coumarate as substrate. Follows a two-step reaction mechanism, wherein the carboxylate substrate first undergoes adenylation by ATP, followed by a thioesterification in the presence of CoA to yield the final CoA thioester. In Arabidopsis thaliana (Mouse-ear cress), this protein is 4-coumarate--CoA ligase-like 3.